We begin with the raw amino-acid sequence, 60 residues long: Small ribosomal subunit protein eS31 (60 aa).

The Zn(2+) site is built by C27, C30, C45, and C48. The C4-type zinc finger occupies 27–48 (CPRCGPGVFMAEHLNRYACGKC).

The protein belongs to the eukaryotic ribosomal protein eS31 family. Part of the 30S ribosomal subunit. Zn(2+) serves as cofactor.

This chain is Small ribosomal subunit protein eS31, found in Methanocaldococcus jannaschii (strain ATCC 43067 / DSM 2661 / JAL-1 / JCM 10045 / NBRC 100440) (Methanococcus jannaschii).